The sequence spans 129 residues: D-ribose pyranase (129 aa).

His-20 functions as the Proton donor in the catalytic mechanism. Substrate contacts are provided by residues Asp-28, His-96, and 118-120; that span reads YAN.

Belongs to the RbsD / FucU family. RbsD subfamily. In terms of assembly, homodecamer.

Its subcellular location is the cytoplasm. It carries out the reaction beta-D-ribopyranose = beta-D-ribofuranose. It participates in carbohydrate metabolism; D-ribose degradation; D-ribose 5-phosphate from beta-D-ribopyranose: step 1/2. Its function is as follows. Catalyzes the interconversion of beta-pyran and beta-furan forms of D-ribose. The chain is D-ribose pyranase from Exiguobacterium sibiricum (strain DSM 17290 / CCUG 55495 / CIP 109462 / JCM 13490 / 255-15).